Reading from the N-terminus, the 210-residue chain is Thymidylate kinase (210 aa).

Residue 10 to 17 (GPEGAGKS) participates in ATP binding.

It belongs to the thymidylate kinase family.

It catalyses the reaction dTMP + ATP = dTDP + ADP. Its function is as follows. Phosphorylation of dTMP to form dTDP in both de novo and salvage pathways of dTTP synthesis. The polypeptide is Thymidylate kinase (Pseudomonas putida (strain ATCC 700007 / DSM 6899 / JCM 31910 / BCRC 17059 / LMG 24140 / F1)).